A 153-amino-acid polypeptide reads, in one-letter code: Arachidonate 5-lipoxygenase-activating protein (153 aa).

The Lumenal portion of the chain corresponds to methionine 1–asparagine 8. The helical transmembrane segment at valine 9–valine 30 threads the bilayer. The Cytoplasmic segment spans residues glutamate 31–arginine 52. A helical transmembrane segment spans residues valine 53 to leucine 77. The Lumenal segment spans residues cysteine 78–glutamine 80. The chain crosses the membrane as a helical span at residues valine 81–leucine 102. Over glycine 103–glutamine 107 the chain is Cytoplasmic. The stretch at serine 108 to glycine 115 is an intramembrane region. A helical membrane pass occupies residues lysine 116 to alanine 128. The Lumenal portion of the chain corresponds to glycine 129–threonine 153.

Belongs to the MAPEG family. As to quaternary structure, homotrimer. Interacts with LTC4S and ALOX5.

It is found in the nucleus membrane. Its subcellular location is the endoplasmic reticulum membrane. Required for leukotriene biosynthesis by ALOX5 (5-lipoxygenase). Anchors ALOX5 to the membrane. Binds arachidonic acid, and could play an essential role in the transfer of arachidonic acid to ALOX5. Binds to MK-886, a compound that blocks the biosynthesis of leukotrienes. The polypeptide is Arachidonate 5-lipoxygenase-activating protein (ALOX5AP) (Macaca mulatta (Rhesus macaque)).